Consider the following 1040-residue polypeptide: Multidrug resistance protein MdtB (1040 aa).

A run of 12 helical transmembrane segments spans residues 16-36 (FIMRPVATTLLMVAILLAGII), 347-367 (LMMAIALVVMIIYLFLRNIPA), 369-389 (IIPGVAVPLSLIGTFAVMVFL), 396-416 (LTLMALTIATGFVVDDAIVVI), 440-460 (IGFTIISLTFSLIAVLIPLLF), 472-492 (FAITLAVAILISAVVSLTLTP), 537-557 (WLTLSVALSTLLLSVLLWVFI), 863-883 (LGSTVWLIVAAVVAMYIVLGI), 888-908 (FIHPITILSTLPTAGVGALLA), 911-931 (IAGSELDVIAIIGIILLIGIV), 968-988 (ILMTTLAALLGALPLMLSTGV), and 998-1018 (IGMVGGLIVSQVLTLFTTPVI).

This sequence belongs to the resistance-nodulation-cell division (RND) (TC 2.A.6) family. MdtB subfamily. As to quaternary structure, part of a tripartite efflux system composed of MdtA, MdtB and MdtC. MdtB forms a heteromultimer with MdtC.

The protein resides in the cell inner membrane. In terms of biological role, the MdtABC tripartite complex confers resistance against novobiocin and deoxycholate. This is Multidrug resistance protein MdtB from Escherichia coli O17:K52:H18 (strain UMN026 / ExPEC).